The primary structure comprises 209 residues: dTTP/UTP pyrophosphatase (209 aa).

The active-site Proton acceptor is Asp79.

This sequence belongs to the Maf family. YhdE subfamily. It depends on a divalent metal cation as a cofactor.

It localises to the cytoplasm. It carries out the reaction dTTP + H2O = dTMP + diphosphate + H(+). It catalyses the reaction UTP + H2O = UMP + diphosphate + H(+). Functionally, nucleoside triphosphate pyrophosphatase that hydrolyzes dTTP and UTP. May have a dual role in cell division arrest and in preventing the incorporation of modified nucleotides into cellular nucleic acids. In Chelativorans sp. (strain BNC1), this protein is dTTP/UTP pyrophosphatase.